The chain runs to 96 residues: Co-chaperonin GroES (96 aa).

It belongs to the GroES chaperonin family. Heptamer of 7 subunits arranged in a ring. Interacts with the chaperonin GroEL.

The protein resides in the cytoplasm. Functionally, together with the chaperonin GroEL, plays an essential role in assisting protein folding. The GroEL-GroES system forms a nano-cage that allows encapsulation of the non-native substrate proteins and provides a physical environment optimized to promote and accelerate protein folding. GroES binds to the apical surface of the GroEL ring, thereby capping the opening of the GroEL channel. The polypeptide is Co-chaperonin GroES (Delftia acidovorans (strain DSM 14801 / SPH-1)).